A 68-amino-acid chain; its full sequence is Conotoxin Lt5.11 (68 aa).

The N-terminal stretch at 1 to 19 is a signal peptide; sequence MLCLPVFIILLLLASPAAP. Positions 20-54 are excised as a propeptide; sequence KSLETRIQNDLIRAGLTDADLKTEKGFLSGLLNVA.

The protein belongs to the conotoxin T superfamily. Contains 2 disulfide bonds that can be either 'C1-C3, C2-C4' or 'C1-C4, C2-C3', since these disulfide connectivities have been observed for conotoxins with cysteine framework V (for examples, see AC P0DQQ7 and AC P81755). As to expression, expressed by the venom duct.

Its subcellular location is the secreted. The protein is Conotoxin Lt5.11 of Conus litteratus (Lettered cone).